The chain runs to 137 residues: Large ribosomal subunit protein uL16 (137 aa).

It belongs to the universal ribosomal protein uL16 family. Part of the 50S ribosomal subunit.

Binds 23S rRNA and is also seen to make contacts with the A and possibly P site tRNAs. This Chlamydia abortus (strain DSM 27085 / S26/3) (Chlamydophila abortus) protein is Large ribosomal subunit protein uL16.